The following is a 392-amino-acid chain: Anhydro-N-acetylmuramic acid kinase (392 aa).

An ATP-binding site is contributed by 22–29; the sequence is GTSMDGVD.

It belongs to the anhydro-N-acetylmuramic acid kinase family.

It carries out the reaction 1,6-anhydro-N-acetyl-beta-muramate + ATP + H2O = N-acetyl-D-muramate 6-phosphate + ADP + H(+). Its pathway is amino-sugar metabolism; 1,6-anhydro-N-acetylmuramate degradation. The protein operates within cell wall biogenesis; peptidoglycan recycling. In terms of biological role, catalyzes the specific phosphorylation of 1,6-anhydro-N-acetylmuramic acid (anhMurNAc) with the simultaneous cleavage of the 1,6-anhydro ring, generating MurNAc-6-P. Is required for the utilization of anhMurNAc either imported from the medium or derived from its own cell wall murein, and thus plays a role in cell wall recycling. This chain is Anhydro-N-acetylmuramic acid kinase, found in Burkholderia mallei (strain NCTC 10229).